Here is a 252-residue protein sequence, read N- to C-terminus: TLC domain-containing protein 1 (252 aa).

The N-terminal stretch at 1 to 29 is a signal peptide; sequence MGPGWRAPSAALVGGSVALFGALRRAALA. Residues 30 to 47 lie on the Extracellular side of the membrane; sequence LPRPAAVRSRPGRVWRWR. The region spanning 41 to 235 is the TLC domain; sequence GRVWRWRNLL…LLRSDFFPSL (195 aa). The chain crosses the membrane as a helical span at residues 48–68; that stretch reads NLLVSFAHSVLAGLWALFSLW. Topologically, residues 69–84 are cytoplasmic; sequence QSPELLSDIQDGYSVS. A helical transmembrane segment spans residues 85–105; sequence GHLLVCFSSGYFIHDSLDIIF. Residues 106-124 are Extracellular-facing; the sequence is NQQSRSSWEYLVHHAMAIS. The helical intramembrane region spans 125–145; that stretch reads AFVSLIITGRFLVAAMLLLLV. Topologically, residues 146–174 are extracellular; the sequence is EVSNIFLTIRMLLKMSNVPSPALYEANKY. The chain crosses the membrane as a helical span at residues 175–195; it reads VNLVMYFAFRLAPQVYLTWYF. Residues 196–202 lie on the Cytoplasmic side of the membrane; it reads VRYVEVQ. The chain crosses the membrane as a helical span at residues 203-223; sequence GQGAFLMANLLLLDAMILMYF. Topologically, residues 224–252 are extracellular; that stretch reads SRLLRSDFFPSLRKGSVGRDVDGEKFLID.

In terms of assembly, interacts with CACNA1C in vitro; however the relevance of the interaction in vivo is unclear.

It localises to the cell membrane. Functionally, regulates the composition and fluidity of the plasma membrane. Inhibits the incorporation of membrane-fluidizing phospholipids containing omega-3 long-chain polyunsaturated fatty acids (LCPUFA) and thereby promotes membrane rigidity. Does not appear to have any effect on LCPUFA synthesis. This Gallus gallus (Chicken) protein is TLC domain-containing protein 1 (TLCD1).